The primary structure comprises 104 residues: UPF0235 protein Sfri_2863 (104 aa).

Belongs to the UPF0235 family.

This chain is UPF0235 protein Sfri_2863, found in Shewanella frigidimarina (strain NCIMB 400).